The following is a 397-amino-acid chain: Lysophospholipid transporter LplT (397 aa).

A run of 11 helical transmembrane segments spans residues 16 to 36, 53 to 73, 91 to 111, 139 to 159, 164 to 184, 227 to 247, 253 to 273, 281 to 301, 305 to 325, 352 to 372, and 373 to 393; these read MLAVICAQFLSAFGDNALLFA, VLQMLFVGAYILFAPFVGQFA, LGAGCICFGVNPFIGYTLVGI, LMESSTIAAILLGSMAGGILA, LAALIVCALVYGGAVVANLWI, LFWGAGVTLRFLLVIWVPVAL, AMPTYLNAMVAVGIVLGAGAA, TVSRCMPAGILIGIAVMAFAV, LLPAFGLLLLLGVFGGFFIVP, NVAMLLMLGLYSLAVSVGVPP, and VAVGIGFGAVFAVAIAALWVW.

Belongs to the major facilitator superfamily. LplT (TC 2.A.1.42) family.

The protein localises to the cell inner membrane. Functionally, catalyzes the facilitated diffusion of 2-acyl-glycero-3-phosphoethanolamine (2-acyl-GPE) into the cell. This Klebsiella pneumoniae (strain 342) protein is Lysophospholipid transporter LplT.